Here is a 404-residue protein sequence, read N- to C-terminus: Sorting nexin-5 (404 aa).

Position 2 is an N-acetylalanine (alanine 2). The PX domain maps to leucine 25–leucine 172. Residues serine 40 to lysine 46, phenylalanine 99 to lysine 105, and glutamate 113 to methionine 116 each bind a 1,2-diacyl-sn-glycero-3-phospho-(1D-myo-inositol-4,5-bisphosphate). The tract at residues aspartate 169–valine 261 is interaction with DOCK1. The interval phenylalanine 183–serine 200 is membrane-binding amphipathic helix. Position 193 is a phosphoserine (serine 193). The 203-residue stretch at valine 202–asparagine 404 folds into the BAR domain. Lysine 275 is subject to N6-acetyllysine.

The protein belongs to the sorting nexin family. In terms of assembly, forms heterodimers with BAR domain-containing sorting nexins SNX1 and SNX2; does not homodimerize. The heterodimers are proposed to self-assemble into helical arrays on the membrane to stabilize and expand local membrane curvature underlying endosomal tubule formation. Thought to be a component of the originally described retromer complex (also called SNX-BAR retromer) which is a pentamer containing the heterotrimeric retromer cargo-selective complex (CSC), also described as vacuolar protein sorting subcomplex (VPS), and a heterodimeric membrane-deforming subcomplex formed between SNX1 or SNX2 and SNX5 or SNX6 (also called SNX-BAR subcomplex); the respective CSC and SNX-BAR subcomplexes associate with low affinity. Interacts with SNX1, SNX2, VPS26A, VPS29, VPS35, DCTN1, DOCK1, MIB1, PIP5K1C. Interacts with HGS; increased by PIP5K1C kinase activity and by PtdIns(3P) and/or PtdIns(3,4)P2.

The protein resides in the endosome. It is found in the early endosome. Its subcellular location is the early endosome membrane. It localises to the cell membrane. The protein localises to the cytoplasmic vesicle membrane. The protein resides in the cytoplasm. It is found in the cell projection. Its subcellular location is the phagocytic cup. It localises to the ruffle. Its function is as follows. Involved in several stages of intracellular trafficking. Interacts with membranes containing phosphatidylinositol lipids. Acts in part as component of the retromer membrane-deforming SNX-BAR subcomplex. The SNX-BAR retromer mediates retrograde transport of cargo proteins from endosomes to the trans-Golgi network (TGN) and is involved in endosome-to-plasma membrane transport for cargo protein recycling. The SNX-BAR subcomplex functions to deform the donor membrane into a tubular profile called endosome-to-TGN transport carrier (ETC). Does not have in vitro vesicle-to-membrane remodeling activity. Involved in retrograde transport of lysosomal enzyme receptor IGF2R. May function as link between endosomal transport vesicles and dynactin. Plays a role in the internalization of EGFR after EGF stimulation. Involved in EGFR endosomal sorting and degradation; the function involves PIP5K1C and is retromer-independent. Together with PIP5K1C facilitates HGS interaction with ubiquitinated EGFR, which initiates EGFR sorting to intraluminal vesicles (ILVs) of the multivesicular body for subsequent lysosomal degradation. Involved in E-cadherin sorting and degradation; inhibits PIP5K1C-mediated E-cadherin degradation. Plays a role in macropinocytosis. The protein is Sorting nexin-5 (Snx5) of Rattus norvegicus (Rat).